The chain runs to 638 residues: DNA gyrase subunit B (638 aa).

Positions 423–537 (CEVYIVEGDS…KGHVYLAMPP (115 aa)) constitute a Toprim domain. Glu-429, Asp-502, and Asp-504 together coordinate Mg(2+).

It belongs to the type II topoisomerase GyrB family. Heterotetramer, composed of two GyrA and two GyrB chains. In the heterotetramer, GyrA contains the active site tyrosine that forms a transient covalent intermediate with DNA, while GyrB binds cofactors and catalyzes ATP hydrolysis. It depends on Mg(2+) as a cofactor. The cofactor is Mn(2+). Ca(2+) is required as a cofactor.

It localises to the cytoplasm. It carries out the reaction ATP-dependent breakage, passage and rejoining of double-stranded DNA.. A type II topoisomerase that negatively supercoils closed circular double-stranded (ds) DNA in an ATP-dependent manner to modulate DNA topology and maintain chromosomes in an underwound state. Negative supercoiling favors strand separation, and DNA replication, transcription, recombination and repair, all of which involve strand separation. Also able to catalyze the interconversion of other topological isomers of dsDNA rings, including catenanes and knotted rings. Type II topoisomerases break and join 2 DNA strands simultaneously in an ATP-dependent manner. This Treponema denticola (strain ATCC 35405 / DSM 14222 / CIP 103919 / JCM 8153 / KCTC 15104) protein is DNA gyrase subunit B.